We begin with the raw amino-acid sequence, 60 residues long: uncharacterized protein (60 aa).

A helical transmembrane segment spans residues 27–49 (YYWLVSTARMVLGVTILILILIG).

Its subcellular location is the membrane. This is an uncharacterized protein from Archaeoglobus fulgidus (strain ATCC 49558 / DSM 4304 / JCM 9628 / NBRC 100126 / VC-16).